The primary structure comprises 239 residues: Ribonuclease PH (239 aa).

Residues Arg-86 and 124 to 126 contribute to the phosphate site; that span reads GTR.

This sequence belongs to the RNase PH family. In terms of assembly, homohexameric ring arranged as a trimer of dimers.

It catalyses the reaction tRNA(n+1) + phosphate = tRNA(n) + a ribonucleoside 5'-diphosphate. In terms of biological role, phosphorolytic 3'-5' exoribonuclease that plays an important role in tRNA 3'-end maturation. Removes nucleotide residues following the 3'-CCA terminus of tRNAs; can also add nucleotides to the ends of RNA molecules by using nucleoside diphosphates as substrates, but this may not be physiologically important. Probably plays a role in initiation of 16S rRNA degradation (leading to ribosome degradation) during starvation. This chain is Ribonuclease PH, found in Anaeromyxobacter dehalogenans (strain 2CP-1 / ATCC BAA-258).